The sequence spans 108 residues: Iron-sulfur cluster assembly protein CyaY (108 aa).

This sequence belongs to the frataxin family.

Functionally, involved in iron-sulfur (Fe-S) cluster assembly. May act as a regulator of Fe-S biogenesis. This Burkholderia ambifaria (strain MC40-6) protein is Iron-sulfur cluster assembly protein CyaY.